The primary structure comprises 251 residues: 5'-nucleotidase SurE (251 aa).

A divalent metal cation-binding residues include D8, D9, S39, and N95.

It belongs to the SurE nucleotidase family. Requires a divalent metal cation as cofactor.

It localises to the cytoplasm. The enzyme catalyses a ribonucleoside 5'-phosphate + H2O = a ribonucleoside + phosphate. Functionally, nucleotidase that shows phosphatase activity on nucleoside 5'-monophosphates. This is 5'-nucleotidase SurE from Clostridium botulinum (strain Eklund 17B / Type B).